A 477-amino-acid chain; its full sequence is Ribulose bisphosphate carboxylase large chain (477 aa).

A propeptide spanning residues Met-1–Ser-2 is cleaved from the precursor. Position 3 is an N-acetylproline (Pro-3). Lys-14 carries the post-translational modification N6,N6,N6-trimethyllysine. Substrate contacts are provided by Asn-123 and Thr-173. Catalysis depends on Lys-175, which acts as the Proton acceptor. Position 177 (Lys-177) interacts with substrate. Mg(2+)-binding residues include Lys-201, Asp-203, and Glu-204. Lys-201 is subject to N6-carboxylysine. The active-site Proton acceptor is His-294. The substrate site is built by Arg-295, His-327, and Ser-379.

The protein belongs to the RuBisCO large chain family. Type I subfamily. Heterohexadecamer of 8 large chains and 8 small chains; disulfide-linked. The disulfide link is formed within the large subunit homodimers. Mg(2+) serves as cofactor. The disulfide bond which can form in the large chain dimeric partners within the hexadecamer appears to be associated with oxidative stress and protein turnover.

It localises to the plastid. The protein localises to the chloroplast. The enzyme catalyses 2 (2R)-3-phosphoglycerate + 2 H(+) = D-ribulose 1,5-bisphosphate + CO2 + H2O. The catalysed reaction is D-ribulose 1,5-bisphosphate + O2 = 2-phosphoglycolate + (2R)-3-phosphoglycerate + 2 H(+). In terms of biological role, ruBisCO catalyzes two reactions: the carboxylation of D-ribulose 1,5-bisphosphate, the primary event in carbon dioxide fixation, as well as the oxidative fragmentation of the pentose substrate in the photorespiration process. Both reactions occur simultaneously and in competition at the same active site. This Nicotiana debneyi (Debney's tobacco) protein is Ribulose bisphosphate carboxylase large chain.